The following is a 305-amino-acid chain: Recombination-associated protein RdgC (305 aa).

The protein belongs to the RdgC family.

The protein localises to the cytoplasm. It localises to the nucleoid. May be involved in recombination. This chain is Recombination-associated protein RdgC, found in Sodalis glossinidius (strain morsitans).